A 567-amino-acid polypeptide reads, in one-letter code: Amino-acid acetyltransferase, mitochondrial (567 aa).

The region spanning 392–558 is the N-acetyltransferase domain; the sequence is KDSPQTNPLH…ARLKEYAKHI (167 aa).

Belongs to the acetyltransferase family.

It is found in the mitochondrion. It carries out the reaction L-glutamate + acetyl-CoA = N-acetyl-L-glutamate + CoA + H(+). It functions in the pathway amino-acid biosynthesis; L-arginine biosynthesis; N(2)-acetyl-L-ornithine from L-glutamate: step 1/4. Functionally, N-acetylglutamate synthase involved in arginine biosynthesis. This Vanderwaltozyma polyspora (strain ATCC 22028 / DSM 70294 / BCRC 21397 / CBS 2163 / NBRC 10782 / NRRL Y-8283 / UCD 57-17) (Kluyveromyces polysporus) protein is Amino-acid acetyltransferase, mitochondrial (ARG2).